Here is a 1064-residue protein sequence, read N- to C-terminus: Leucine--tRNA ligase (1064 aa).

The interval 1 to 25 is disordered; the sequence is MARAMSETAEPGARTGAADTTVAPT. A 'HIGH' region motif is present at residues 106–117; the sequence is PYPSGSGLHVGH. The interval 435–456 is disordered; it reads GRPGGGTEPADTAGPEAGADPA. Positions 831 to 835 match the 'KMSKS' region motif; that stretch reads KMGKS. Residue K834 coordinates ATP.

It belongs to the class-I aminoacyl-tRNA synthetase family.

It localises to the cytoplasm. The catalysed reaction is tRNA(Leu) + L-leucine + ATP = L-leucyl-tRNA(Leu) + AMP + diphosphate. This Frankia casuarinae (strain DSM 45818 / CECT 9043 / HFP020203 / CcI3) protein is Leucine--tRNA ligase.